We begin with the raw amino-acid sequence, 484 residues long: UDP-N-acetylmuramate--L-alanine ligase (484 aa).

An ATP-binding site is contributed by 128–134 (GTHGKTT).

The protein belongs to the MurCDEF family.

It is found in the cytoplasm. The enzyme catalyses UDP-N-acetyl-alpha-D-muramate + L-alanine + ATP = UDP-N-acetyl-alpha-D-muramoyl-L-alanine + ADP + phosphate + H(+). Its pathway is cell wall biogenesis; peptidoglycan biosynthesis. Its function is as follows. Cell wall formation. This chain is UDP-N-acetylmuramate--L-alanine ligase, found in Shewanella loihica (strain ATCC BAA-1088 / PV-4).